The following is a 155-amino-acid chain: Xanthine-guanine phosphoribosyltransferase (155 aa).

Residues 37–38 (RG) and 91–99 (DDLVDTGNT) contribute to the 5-phospho-alpha-D-ribose 1-diphosphate site. Aspartate 92 provides a ligand contact to Mg(2+). Positions 95 and 138 each coordinate guanine. Residues aspartate 95 and isoleucine 138 each contribute to the xanthine site. Residues 95 to 99 (DTGNT) and 137 to 138 (WI) each bind GMP.

This sequence belongs to the purine/pyrimidine phosphoribosyltransferase family. XGPT subfamily. Homotetramer. The cofactor is Mg(2+).

Its subcellular location is the cell inner membrane. The catalysed reaction is GMP + diphosphate = guanine + 5-phospho-alpha-D-ribose 1-diphosphate. It catalyses the reaction XMP + diphosphate = xanthine + 5-phospho-alpha-D-ribose 1-diphosphate. It carries out the reaction IMP + diphosphate = hypoxanthine + 5-phospho-alpha-D-ribose 1-diphosphate. The protein operates within purine metabolism; GMP biosynthesis via salvage pathway; GMP from guanine: step 1/1. Its pathway is purine metabolism; XMP biosynthesis via salvage pathway; XMP from xanthine: step 1/1. Its function is as follows. Acts on guanine, xanthine and to a lesser extent hypoxanthine. Purine salvage pathway enzyme that catalyzes the transfer of the ribosyl-5-phosphate group from 5-phospho-alpha-D-ribose 1-diphosphate (PRPP) to the N9 position of the 6-oxopurines guanine and xanthine to form the corresponding ribonucleotides GMP (guanosine 5'-monophosphate) and XMP (xanthosine 5'-monophosphate), with the release of PPi. To a lesser extent, also acts on hypoxanthine. This is Xanthine-guanine phosphoribosyltransferase from Haemophilus influenzae (strain ATCC 51907 / DSM 11121 / KW20 / Rd).